Reading from the N-terminus, the 373-residue chain is Aminomethyltransferase (373 aa).

It belongs to the GcvT family. The glycine cleavage system is composed of four proteins: P, T, L and H.

The catalysed reaction is N(6)-[(R)-S(8)-aminomethyldihydrolipoyl]-L-lysyl-[protein] + (6S)-5,6,7,8-tetrahydrofolate = N(6)-[(R)-dihydrolipoyl]-L-lysyl-[protein] + (6R)-5,10-methylene-5,6,7,8-tetrahydrofolate + NH4(+). The glycine cleavage system catalyzes the degradation of glycine. This Prochlorococcus marinus (strain SARG / CCMP1375 / SS120) protein is Aminomethyltransferase.